Here is a 201-residue protein sequence, read N- to C-terminus: 3-isopropylmalate dehydratase small subunit (201 aa).

This sequence belongs to the LeuD family. LeuD type 1 subfamily. In terms of assembly, heterodimer of LeuC and LeuD.

The catalysed reaction is (2R,3S)-3-isopropylmalate = (2S)-2-isopropylmalate. Its pathway is amino-acid biosynthesis; L-leucine biosynthesis; L-leucine from 3-methyl-2-oxobutanoate: step 2/4. Its function is as follows. Catalyzes the isomerization between 2-isopropylmalate and 3-isopropylmalate, via the formation of 2-isopropylmaleate. The polypeptide is 3-isopropylmalate dehydratase small subunit (Nitrobacter winogradskyi (strain ATCC 25391 / DSM 10237 / CIP 104748 / NCIMB 11846 / Nb-255)).